A 247-amino-acid polypeptide reads, in one-letter code: Probable dihydroorotate dehydrogenase B (NAD(+)), electron transfer subunit (247 aa).

Residues 1-87 (MLRRVMIKET…RGPYGNGFKS (87 aa)) enclose the FAD-binding FR-type domain. [2Fe-2S] cluster is bound by residues Cys200, Cys205, Cys208, and Cys216.

Belongs to the PyrK family. As to quaternary structure, heterotetramer of 2 PyrK and 2 PyrD type B subunits. Requires [2Fe-2S] cluster as cofactor. The cofactor is FAD.

It functions in the pathway pyrimidine metabolism; UMP biosynthesis via de novo pathway; orotate from (S)-dihydroorotate (NAD(+) route): step 1/1. In terms of biological role, responsible for channeling the electrons from the oxidation of dihydroorotate from the FMN redox center in the PyrD type B subunit to the ultimate electron acceptor NAD(+). The sequence is that of Probable dihydroorotate dehydrogenase B (NAD(+)), electron transfer subunit from Pyrococcus abyssi (strain GE5 / Orsay).